The sequence spans 511 residues: Histidine ammonia-lyase (511 aa).

Residues 142-144 (ASG) constitute a cross-link (5-imidazolinone (Ala-Gly)). Residue Ser143 is modified to 2,3-didehydroalanine (Ser).

The protein belongs to the PAL/histidase family. Post-translationally, contains an active site 4-methylidene-imidazol-5-one (MIO), which is formed autocatalytically by cyclization and dehydration of residues Ala-Ser-Gly.

It localises to the cytoplasm. The enzyme catalyses L-histidine = trans-urocanate + NH4(+). It functions in the pathway amino-acid degradation; L-histidine degradation into L-glutamate; N-formimidoyl-L-glutamate from L-histidine: step 1/3. The sequence is that of Histidine ammonia-lyase from Rhizobium rhizogenes (strain K84 / ATCC BAA-868) (Agrobacterium radiobacter).